The following is a 782-amino-acid chain: General transcription and DNA repair factor IIH helicase/translocase subunit XPB (782 aa).

Residues 1–11 are compositionally biased toward basic and acidic residues; it reads MGKRDRADREK. The tract at residues 1–51 is disordered; that stretch reads MGKRDRADREKKKSKKRHYEDEEDEEDDAPGNDTQEAVPSAAGKQVDESGT. The Nuclear localization signal motif lies at 6-18; that stretch reads RADREKKKSKKRH. The span at 21–30 shows a compositional bias: acidic residues; that stretch reads DEEDEEDDAP. The region spanning 327 to 488 is the Helicase ATP-binding domain; that stretch reads MFGNGRARSG…DLNFLIGPKL (162 aa). 340-347 serves as a coordination point for ATP; sequence LPCGAGKS. Residues 441–444 carry the DEVH box motif; that stretch reads DEVH. The Helicase C-terminal domain occupies 542 to 702; sequence RACQFLIKFH…LAGMEEEDLA (161 aa). A Phosphoserine modification is found at serine 686. Serine 751 bears the Phosphoserine; by CK2 mark.

The protein belongs to the helicase family. RAD25/XPB subfamily. In terms of assembly, component of the 7-subunit TFIIH core complex composed of XPB/ERCC3, XPD/ERCC2, GTF2H1, GTF2H2, GTF2H3, GTF2H4 and GTF2H5, which is active in NER. The core complex associates with the 3-subunit CDK-activating kinase (CAK) module composed of CCNH/cyclin H, CDK7 and MNAT1 to form the 10-subunit holoenzyme (holo-TFIIH) active in transcription. Interacts with PUF60. Interacts with ATF7IP. Interacts with KAT2A; leading to KAT2A recruitment to promoters and acetylation of histones. Part of TBP-based Pol II pre-initiation complex (PIC), in which Pol II core assembles with general transcription factors and other specific initiation factors including GTF2E1, GTF2E2, GTF2F1, GTF2F2, TCEA1, ERCC2, ERCC3, GTF2H2, GTF2H3, GTF2H4, GTF2H5, GTF2A1, GTF2A2, GTF2B and TBP; this large multi-subunit PIC complex mediates DNA unwinding and targets Pol II core to the transcription start site where the first phosphodiester bond forms. Post-translationally, phosphorylation on Ser-751 by CK2 controls the 5'-excision activity of ERCC1-XPF endonuclease; phosphorylated protein inhibits the excision activity and thus NER. Dephosphorylation reactivates the 5'-excision step. Phosphorylation has no effect on transcription or the 3'-5' helicase activity.

It is found in the nucleus. The catalysed reaction is Couples ATP hydrolysis with the unwinding of duplex DNA by translocating in the 3'-5' direction.. The enzyme catalyses ATP + H2O = ADP + phosphate + H(+). Its activity is regulated as follows. Phosphorylation on Ser-751 by CK2 controls the 5'-excision activity of ERCC1-XPF endonuclease; phosphorylated protein inhibits the excision activity and thus NER. ATPase activity is stimulated by TFIIH subunit p52 (GTF2H4). DNA translocase activity by this subunit in TFIIH is stimulated by XPA, ERCC5/XPG and XFP plus ERCC1. ATP-dependent 3'-5' DNA helicase/translocase; binds dsDNA rather than ssDNA, unzipping it in a translocase rather than classical helicase activity. Component of the general transcription and DNA repair factor IIH (TFIIH) core complex. When complexed to CDK-activating kinase (CAK), involved in RNA transcription by RNA polymerase II. The ATPase activity of XPB/ERCC3, but not its helicase activity, is required for DNA opening; it may wrap around the damaged DNA wedging it open, causing localized melting and twisting that allows XPD/ERCC2 helicase to anchor. The ATP-dependent helicase activity of XPB/ERCC3 may be required for promoter escape. Also involved in transcription-coupled nucleotide excision repair (NER) of damaged DNA. In NER, TFIIH acts by opening DNA around the lesion to allow the excision of the damaged oligonucleotide and its replacement by a new DNA fragment. The structure of the TFIIH transcription complex differs from the NER-TFIIH complex; large movements by XPD/ERCC2 and XPB/ERCC3 are stabilized by XPA. This chain is General transcription and DNA repair factor IIH helicase/translocase subunit XPB (ERCC3), found in Bos taurus (Bovine).